The chain runs to 227 residues: Cleavage and polyadenylation specificity factor subunit 5 (227 aa).

Ser-2 carries the N-acetylserine modification. The necessary for RNA-binding stretch occupies residues 2 to 147 (SVVPPNRSQT…DWVIDDCIGN (146 aa)). An Omega-N-methylarginine modification is found at Arg-15. Lys-23 and Lys-29 each carry N6-acetyllysine. Tyr-40 is modified (phosphotyrosine). Lys-56 carries the N6-acetyllysine modification. Positions 76–201 (MRRTVEGVLI…KLVAAPLFEL (126 aa)) constitute a Nudix hydrolase domain. A necessary for interactions with PAPOLA and PABPN1 region spans residues 81–160 (EGVLIVHEHR…PNFEPPQYPY (80 aa)). The tract at residues 102–104 (TFF) is interaction with RNA. The Nudix box motif lies at 109–130 (GELNPGEDEVEGLKRLMTEILG).

The protein belongs to the Nudix hydrolase family. CPSF5 subfamily. Homodimer (via N- and C-terminus); binds RNA as homodimer. Component of the cleavage factor Im (CFIm) complex which is a heterotetramer composed of two subunits of NUDT21/CPSF5 and two subunits of CPSF6 or CPSF7 or a heterodimer of CPSF6 and CPSF7. The cleavage factor Im (CFIm) complex associates with the CPSF and CSTF complexes to promote the assembly of the core mRNA 3'-processing machinery. Interacts with CPSF6 (via the RRM domain); this interaction is direct and enhances binding to RNA. Interacts with CPSF7. Interacts with FIP1L1; this interaction occurs in a RNA sequence-specific manner. Interacts with PABPN1. Interacts (via N-terminus) with PAPOLA (via C-terminus); this interaction is direct and diminished by acetylation. Interacts with SNRNP70. Interacts with VIRMA. Acetylated mainly by p300/CBP, recruited to the complex by CPSF6. Acetylation decreases interaction with PAPAO. Deacetylated by the class I/II HDACs, HDAC1, HDAC3 and HDAC10, and by the class III HDACs, SIRT1 and SIRT2. As to expression, expressed in testis. Expressed in male germ cells (at protein level).

It is found in the nucleus. It localises to the cytoplasm. In terms of biological role, component of the cleavage factor Im (CFIm) complex that functions as an activator of the pre-mRNA 3'-end cleavage and polyadenylation processing required for the maturation of pre-mRNA into functional mRNAs. CFIm contributes to the recruitment of multiprotein complexes on specific sequences on the pre-mRNA 3'-end, so called cleavage and polyadenylation signals (pA signals). Most pre-mRNAs contain multiple pA signals, resulting in alternative cleavage and polyadenylation (APA) producing mRNAs with variable 3'-end formation. The CFIm complex acts as a key regulator of cleavage and polyadenylation site choice during APA through its binding to 5'-UGUA-3' elements localized in the 3'-untranslated region (UTR) for a huge number of pre-mRNAs. NUDT21/CPSF5 activates indirectly the mRNA 3'-processing machinery by recruiting CPSF6 and/or CPSF7. Binds to 5'-UGUA-3' elements localized upstream of pA signals that act as enhancers of pre-mRNA 3'-end processing. The homodimer mediates simultaneous sequence-specific recognition of two 5'-UGUA-3' elements within the pre-mRNA. Plays a role in somatic cell fate transitions and pluripotency by regulating widespread changes in gene expression through an APA-dependent function. Binds to chromatin. Binds to, but does not hydrolyze mono- and di-adenosine nucleotides. This chain is Cleavage and polyadenylation specificity factor subunit 5, found in Mus musculus (Mouse).